A 609-amino-acid polypeptide reads, in one-letter code: UvrABC system protein C (609 aa).

The GIY-YIG domain maps to 15–92 (TGSGVYQMQD…IKQFRPRYNV (78 aa)). Residues 202-237 (DQVIIKLTERMEVASENLVFEEAAHYRDQIRQLRRL) enclose the UVR domain.

The protein belongs to the UvrC family. Interacts with UvrB in an incision complex.

The protein localises to the cytoplasm. The UvrABC repair system catalyzes the recognition and processing of DNA lesions. UvrC both incises the 5' and 3' sides of the lesion. The N-terminal half is responsible for the 3' incision and the C-terminal half is responsible for the 5' incision. The polypeptide is UvrABC system protein C (Coxiella burnetii (strain RSA 331 / Henzerling II)).